Consider the following 190-residue polypeptide: MITMFKIVRGDITKFRAEAIVNAANKYLEHGGGVAYAIAKAASGDVSEYTRISKEEMRRQLGKDWIEHGEVVVTPPMKLKENGVKYVIHTVGPYCGGVWSKDKEEKLKLAILGALKKADELGVKSIAFPAISAGIYGCPLKEVVRTFKEVVKEFLKVANHVKEVYLVLYSERDYKLALETIGLGDNDESR.

The Macro domain maps to 1–185; the sequence is MITMFKIVRG…LALETIGLGD (185 aa).

This is an uncharacterized protein from Pyrococcus horikoshii (strain ATCC 700860 / DSM 12428 / JCM 9974 / NBRC 100139 / OT-3).